Consider the following 251-residue polypeptide: NADPH-dependent oxidoreductase (251 aa).

This sequence belongs to the flavin oxidoreductase frp family. Requires FMN as cofactor.

Functionally, reduces FMN, organic nitro compounds and disulfide DTNB. Involved in maintenance of the cellular redox state and the disulfide stress response. This is NADPH-dependent oxidoreductase (nfrA) from Staphylococcus haemolyticus (strain JCSC1435).